A 505-amino-acid polypeptide reads, in one-letter code: Lysine--tRNA ligase, heat inducible (505 aa).

N6-acetyllysine is present on residues lysine 114 and lysine 156. Positions 415 and 422 each coordinate Mg(2+).

Belongs to the class-II aminoacyl-tRNA synthetase family. Homodimer. Mg(2+) serves as cofactor.

The protein localises to the cytoplasm. The catalysed reaction is tRNA(Lys) + L-lysine + ATP = L-lysyl-tRNA(Lys) + AMP + diphosphate. The protein is Lysine--tRNA ligase, heat inducible (lysU) of Escherichia coli O157:H7.